The following is a 222-amino-acid chain: Endonuclease V (222 aa).

The Mg(2+) site is built by aspartate 43 and aspartate 109.

Belongs to the endonuclease V family. The cofactor is Mg(2+).

The protein localises to the cytoplasm. The catalysed reaction is Endonucleolytic cleavage at apurinic or apyrimidinic sites to products with a 5'-phosphate.. DNA repair enzyme involved in the repair of deaminated bases. Selectively cleaves double-stranded DNA at the second phosphodiester bond 3' to a deoxyinosine leaving behind the intact lesion on the nicked DNA. The sequence is that of Endonuclease V from Roseiflexus sp. (strain RS-1).